The following is a 432-amino-acid chain: Adenylosuccinate synthetase (432 aa).

GTP-binding positions include 13 to 19 and 41 to 43; these read GDEGKGK and GHT. The Proton acceptor role is filled by Asp14. Mg(2+)-binding residues include Asp14 and Gly41. Residues 14–17, 39–42, Thr130, Arg144, Gln225, Thr240, and Arg304 contribute to the IMP site; these read DEGK and NAGH. Catalysis depends on His42, which acts as the Proton donor. 300 to 306 is a substrate binding site; it reads ATTGRKR. Residues Arg306, 332–334, and 415–417 contribute to the GTP site; these read KLD and STG.

The protein belongs to the adenylosuccinate synthetase family. In terms of assembly, homodimer. Mg(2+) serves as cofactor.

It is found in the cytoplasm. It carries out the reaction IMP + L-aspartate + GTP = N(6)-(1,2-dicarboxyethyl)-AMP + GDP + phosphate + 2 H(+). It participates in purine metabolism; AMP biosynthesis via de novo pathway; AMP from IMP: step 1/2. In terms of biological role, plays an important role in the de novo pathway of purine nucleotide biosynthesis. Catalyzes the first committed step in the biosynthesis of AMP from IMP. The sequence is that of Adenylosuccinate synthetase from Pseudoalteromonas atlantica (strain T6c / ATCC BAA-1087).